A 791-amino-acid chain; its full sequence is Phosphoenolpyruvate synthase (791 aa).

Thr416 bears the Phosphothreonine mark. The active-site Tele-phosphohistidine intermediate is His418. Residues Arg508, Arg575, Glu677, Gly698, Ser699, Asn700, and Asp701 each contribute to the substrate site. Residue Glu677 coordinates Mg(2+). Asp701 contributes to the Mg(2+) binding site. The residue at position 744 (Tyr744) is a Phosphotyrosine. Catalysis depends on Cys748, which acts as the Proton donor.

This sequence belongs to the PEP-utilizing enzyme family. It depends on Mg(2+) as a cofactor.

It catalyses the reaction pyruvate + ATP + H2O = phosphoenolpyruvate + AMP + phosphate + 2 H(+). It functions in the pathway carbohydrate biosynthesis; gluconeogenesis. In terms of biological role, catalyzes the phosphorylation of pyruvate to phosphoenolpyruvate. The sequence is that of Phosphoenolpyruvate synthase (ppsA) from Pseudomonas aeruginosa (strain UCBPP-PA14).